A 499-amino-acid chain; its full sequence is Probable cytosol aminopeptidase (499 aa).

Residues Lys-263 and Asp-268 each coordinate Mn(2+). The active site involves Lys-275. Residues Asp-286, Asp-345, and Glu-347 each contribute to the Mn(2+) site. The active site involves Arg-349.

This sequence belongs to the peptidase M17 family. Mn(2+) is required as a cofactor.

It is found in the cytoplasm. It catalyses the reaction Release of an N-terminal amino acid, Xaa-|-Yaa-, in which Xaa is preferably Leu, but may be other amino acids including Pro although not Arg or Lys, and Yaa may be Pro. Amino acid amides and methyl esters are also readily hydrolyzed, but rates on arylamides are exceedingly low.. It carries out the reaction Release of an N-terminal amino acid, preferentially leucine, but not glutamic or aspartic acids.. Functionally, presumably involved in the processing and regular turnover of intracellular proteins. Catalyzes the removal of unsubstituted N-terminal amino acids from various peptides. In Chlamydia caviae (strain ATCC VR-813 / DSM 19441 / 03DC25 / GPIC) (Chlamydophila caviae), this protein is Probable cytosol aminopeptidase.